The sequence spans 202 residues: MFDLTGKHVCYVADCGGIALETSKVLMTKNIAKLAILQSLENPQAIAQLQSIKPSTQIFFWTYDVTMAREEMKKYFDEVMVQMDYIDVLINGATLCDENNIDATINTNLTGMMNTVATVLPHMDRKMGGSGGLIVNVTSVIGLDPSPVFCAYSASKFGVIGFTRSLADPLYYSQNGVAVMAVCCGPTRVFVDRELKAFLEYG.

11–34 lines the NAD(+) pocket; it reads YVADCGGIALETSKVLMTKNIAKL. Substrate is bound at residue Ser-139. Tyr-152 serves as the catalytic Proton acceptor.

The protein belongs to the short-chain dehydrogenases/reductases (SDR) family.

The chain is Alcohol dehydrogenase-related 31 kDa protein (Adhr) from Drosophila erecta (Fruit fly).